Reading from the N-terminus, the 242-residue chain is Prosalusin (242 aa).

Residues 1 to 26 form the signal peptide; the sequence is MAAATRGCRPWGSLLGLLGLVSAAAA. The propeptide occupies 27 to 189; the sequence is AWDLASLRCT…SSWVVYGTNY (163 aa). 93 to 100 serves as a coordination point for ATP; sequence GWTGTGKS. The N-linked (GlcNAc...) asparagine glycan is linked to N149. The tract at residues 210 to 242 is disordered; it reads PPRRSGALPPAPAAPRPALRAQRAGPAGPGAKG. Residues 225–235 are compositionally biased toward low complexity; it reads RPALRAQRAGP. K241 is modified (lysine amide).

The protein belongs to the ClpA/ClpB family. Torsin subfamily. Post-translationally, amidation of salusin-alpha(29-Gly) by peptidylglycine alpha-amidating monooxygenase, PAM, converts Lys-241-Gly-242 to Lys-241-NH2 and gives raise to salusin-alpha. In terms of tissue distribution, isoform 4 is ubiquitously expressed, with high level in vascular endothelial cells and vascular smooth muscle cells.

It is found in the secreted. In terms of biological role, salusins -alpha and -beta may be endocrine and/or paracrine factors able to increase intracellular calcium concentrations and induce cell mitogenesis. Salusins may also be potent hypotensive peptides. This is Prosalusin (TOR2A) from Homo sapiens (Human).